Reading from the N-terminus, the 139-residue chain is HTH-type transcriptional regulator MntR (139 aa).

In terms of domain architecture, HTH dtxR-type spans 1 to 63; that stretch reads MPTPSMEDHI…YEKYRGLTLT (63 aa). Mn(2+) is bound by residues D8, E11, H77, E99, E102, and H103.

This sequence belongs to the DtxR/MntR family. In terms of assembly, homodimer.

The protein localises to the cytoplasm. Its activity is regulated as follows. DNA binding is strongly activated by Mn(2+). Its function is as follows. Central regulator of manganese homeostasis. The protein is HTH-type transcriptional regulator MntR of Lysinibacillus sphaericus (strain C3-41).